The following is an 86-amino-acid chain: Cell division topological specificity factor (86 aa).

The protein belongs to the MinE family.

Functionally, prevents the cell division inhibition by proteins MinC and MinD at internal division sites while permitting inhibition at polar sites. This ensures cell division at the proper site by restricting the formation of a division septum at the midpoint of the long axis of the cell. The chain is Cell division topological specificity factor from Shewanella piezotolerans (strain WP3 / JCM 13877).